A 262-amino-acid chain; its full sequence is Phosphatidylserine decarboxylase proenzyme (262 aa).

Active-site charge relay system; for autoendoproteolytic cleavage activity residues include aspartate 86, histidine 142, and serine 226. Catalysis depends on serine 226, which acts as the Schiff-base intermediate with substrate; via pyruvic acid; for decarboxylase activity. At serine 226 the chain carries Pyruvic acid (Ser); by autocatalysis.

Belongs to the phosphatidylserine decarboxylase family. PSD-B subfamily. Prokaryotic type I sub-subfamily. As to quaternary structure, heterodimer of a large membrane-associated beta subunit and a small pyruvoyl-containing alpha subunit. Requires pyruvate as cofactor. In terms of processing, is synthesized initially as an inactive proenzyme. Formation of the active enzyme involves a self-maturation process in which the active site pyruvoyl group is generated from an internal serine residue via an autocatalytic post-translational modification. Two non-identical subunits are generated from the proenzyme in this reaction, and the pyruvate is formed at the N-terminus of the alpha chain, which is derived from the carboxyl end of the proenzyme. The autoendoproteolytic cleavage occurs by a canonical serine protease mechanism, in which the side chain hydroxyl group of the serine supplies its oxygen atom to form the C-terminus of the beta chain, while the remainder of the serine residue undergoes an oxidative deamination to produce ammonia and the pyruvoyl prosthetic group on the alpha chain. During this reaction, the Ser that is part of the protease active site of the proenzyme becomes the pyruvoyl prosthetic group, which constitutes an essential element of the active site of the mature decarboxylase.

The protein localises to the cell membrane. The catalysed reaction is a 1,2-diacyl-sn-glycero-3-phospho-L-serine + H(+) = a 1,2-diacyl-sn-glycero-3-phosphoethanolamine + CO2. It participates in phospholipid metabolism; phosphatidylethanolamine biosynthesis; phosphatidylethanolamine from CDP-diacylglycerol: step 2/2. Functionally, catalyzes the formation of phosphatidylethanolamine (PtdEtn) from phosphatidylserine (PtdSer). This is Phosphatidylserine decarboxylase proenzyme from Bacillus cereus (strain AH820).